A 697-amino-acid chain; its full sequence is Glycine--tRNA ligase beta subunit (697 aa).

Belongs to the class-II aminoacyl-tRNA synthetase family. Tetramer of two alpha and two beta subunits.

The protein localises to the cytoplasm. It catalyses the reaction tRNA(Gly) + glycine + ATP = glycyl-tRNA(Gly) + AMP + diphosphate. The polypeptide is Glycine--tRNA ligase beta subunit (Cereibacter sphaeroides (strain ATCC 17023 / DSM 158 / JCM 6121 / CCUG 31486 / LMG 2827 / NBRC 12203 / NCIMB 8253 / ATH 2.4.1.) (Rhodobacter sphaeroides)).